The primary structure comprises 236 residues: EP300-interacting inhibitor of differentiation 2 (236 aa).

The segment covering 1 to 15 (MSQLPAVSSAPQTGA) has biased composition (polar residues). The segment at 1 to 102 (MSQLPAVSSA…REGPAAAAAS (102 aa)) is disordered. 2 stretches are compositionally biased toward low complexity: residues 32 to 68 (RALP…GRVA) and 75 to 102 (AAAA…AAAS). Omega-N-methylarginine occurs at positions 63 and 79. A coiled-coil region spans residues 170–190 (RIQELEERRRRFVEACRAREA).

In terms of assembly, heterodimer with EID2B. Interacts with the C-terminus of EP300. Interacts with HDAC1 and HDAC2. Interacts with SMAD2, SMAD4 and with the MH2 domain of SMAD3. As to expression, expressed in heart, brain, kidney and pancreas. Not detected in placenta.

It is found in the nucleus. Functionally, interacts with EP300 and acts as a repressor of MYOD-dependent transcription and muscle differentiation. Inhibits EP300 histone acetyltransferase activity. Acts as a repressor of TGFB/SMAD transcriptional responses. May act as a repressor of the TGFB/SMAD3-dependent signaling by selectively blocking formation of TGFB-induced SMAD3-SMAD4 complex. This chain is EP300-interacting inhibitor of differentiation 2, found in Mus musculus (Mouse).